We begin with the raw amino-acid sequence, 325 residues long: MTRYLARRLLNYLVLLALASFLTYCLTSLAFSPLESLMQRSPRPPQAVIDAKAHDLGLDRPILARYANWVSHAVRGDFGTTITGQPVGTELGRRIGVSLRLLVVGSVFGTVAGVVIGAWGAIRQYRLSDRVMTTLALLVLSTPTFVVANLLILGALRVNWAVGIQLFDYTGETSPGVAGGVWDRLGDRLQHLILPSLTLALAAAAGFSRYQRNAMLDVLGQDFIRTARAKGLTRRRALLKHGLRTALIPMATLFAYGVAGLVTGAVFVEKIFGWHGMGEWMVRGISTQDTNIVAAITVFSGAVVLLAGLLSDVIYAALDPRVRVS.

6 helical membrane-spanning segments follow: residues 12–32 (YLVL…LAFS), 102–122 (LVVG…WGAI), 135–155 (LALL…ILGA), 189–208 (LQHL…AGFS), 248–268 (IPMA…AVFV), and 290–310 (TNIV…AGLL). One can recognise an ABC transmembrane type-1 domain in the interval 95 to 311 (IGVSLRLLVV…AVVLLAGLLS (217 aa)).

It belongs to the binding-protein-dependent transport system permease family. OppBC subfamily. In terms of assembly, the complex is composed of an ATP-binding protein (OppD), two transmembrane proteins (OppB and OppC) and a solute-binding protein (OppA).

Its subcellular location is the cell inner membrane. Part of the ABC transporter complex OppABCD involved in the uptake of oligopeptides. Responsible for the translocation of the substrate across the membrane. The chain is Oligopeptide transport system permease protein OppB from Mycobacterium bovis (strain ATCC BAA-935 / AF2122/97).